Reading from the N-terminus, the 305-residue chain is Porphobilinogen deaminase (305 aa).

C239 carries the S-(dipyrrolylmethanemethyl)cysteine modification.

Belongs to the HMBS family. In terms of assembly, monomer. It depends on dipyrromethane as a cofactor.

The catalysed reaction is 4 porphobilinogen + H2O = hydroxymethylbilane + 4 NH4(+). It functions in the pathway porphyrin-containing compound metabolism; protoporphyrin-IX biosynthesis; coproporphyrinogen-III from 5-aminolevulinate: step 2/4. In terms of biological role, tetrapolymerization of the monopyrrole PBG into the hydroxymethylbilane pre-uroporphyrinogen in several discrete steps. The protein is Porphobilinogen deaminase of Dichelobacter nodosus (strain VCS1703A).